A 555-amino-acid chain; its full sequence is Sulfite reductase [ferredoxin] 1 (555 aa).

A cross-link (3'-(S-cysteinyl)-tyrosine (Tyr-Cys)) is located at residues 69–161 (YTQREQGYDG…SVGLQTTEAC (93 aa)). Positions 417, 423, 463, and 467 each coordinate [4Fe-4S] cluster. Siroheme is bound at residue C467.

Belongs to the nitrite and sulfite reductase 4Fe-4S domain family. Monomer. Siroheme is required as a cofactor. It depends on [4Fe-4S] cluster as a cofactor.

It catalyses the reaction hydrogen sulfide + 6 oxidized [2Fe-2S]-[ferredoxin] + 3 H2O = sulfite + 6 reduced [2Fe-2S]-[ferredoxin] + 7 H(+). In terms of biological role, catalyzes the reduction of sulfite to sulfide, a step in the biosynthesis of sulfur-containing amino acids and cofactors. The sequence is that of Sulfite reductase [ferredoxin] 1 (sir1) from Mycolicibacterium paratuberculosis (strain ATCC BAA-968 / K-10) (Mycobacterium paratuberculosis).